Here is a 498-residue protein sequence, read N- to C-terminus: Glycerol kinase (498 aa).

Residue Thr-11 coordinates ADP. ATP-binding residues include Thr-11, Ser-12, and Ser-13. Thr-11 is a sn-glycerol 3-phosphate binding site. Residue Arg-15 coordinates ADP. Sn-glycerol 3-phosphate-binding residues include Arg-81, Glu-82, Tyr-133, and Asp-242. Glycerol contacts are provided by Arg-81, Glu-82, Tyr-133, Asp-242, and Gln-243. Residues Thr-264 and Gly-307 each contribute to the ADP site. ATP contacts are provided by Thr-264, Gly-307, Gln-311, and Gly-408. The ADP site is built by Gly-408 and Asn-412.

This sequence belongs to the FGGY kinase family.

It carries out the reaction glycerol + ATP = sn-glycerol 3-phosphate + ADP + H(+). It participates in polyol metabolism; glycerol degradation via glycerol kinase pathway; sn-glycerol 3-phosphate from glycerol: step 1/1. With respect to regulation, inhibited by fructose 1,6-bisphosphate (FBP). Its function is as follows. Key enzyme in the regulation of glycerol uptake and metabolism. Catalyzes the phosphorylation of glycerol to yield sn-glycerol 3-phosphate. The sequence is that of Glycerol kinase from Ralstonia pickettii (strain 12J).